A 122-amino-acid polypeptide reads, in one-letter code: Translation repressor protein (122 aa).

A DNA-binding region (H-T-H motif) is located at residues 15 to 37 (VKETLTRMGIANNKDKVLYQSCH).

Controls the translation of a number of proteins (such as regA itself, rIIB and at least 35 others) by binding to their mRNA. This is Translation repressor protein (regA) from Escherichia phage RB69 (Bacteriophage RB69).